A 546-amino-acid chain; its full sequence is Pyrophosphate--fructose 6-phosphate 1-phosphotransferase (546 aa).

Diphosphate is bound at residue G80. D174 provides a ligand contact to Mg(2+). Residues 202 to 204 (TID), 241 to 242 (KY), 249 to 251 (MGR), E310, and 420 to 423 (YEGR) each bind substrate. The active-site Proton acceptor is D204.

It belongs to the phosphofructokinase type A (PFKA) family. PPi-dependent PFK group II subfamily. Clade 'Long' sub-subfamily. Homodimer. Mg(2+) is required as a cofactor. Mn(2+) serves as cofactor.

Its subcellular location is the cytoplasm. The enzyme catalyses beta-D-fructose 6-phosphate + diphosphate = beta-D-fructose 1,6-bisphosphate + phosphate + H(+). It participates in carbohydrate degradation; glycolysis; D-glyceraldehyde 3-phosphate and glycerone phosphate from D-glucose: step 3/4. Non-allosteric. Competitively inhibited by PPi, Pi and fructose 1,6-bisphosphate. Its function is as follows. Catalyzes the phosphorylation of D-fructose 6-phosphate, the first committing step of glycolysis. Uses inorganic phosphate (PPi) as phosphoryl donor instead of ATP like common ATP-dependent phosphofructokinases (ATP-PFKs), which renders the reaction reversible, and can thus function both in glycolysis and gluconeogenesis. Consistently, PPi-PFK can replace the enzymes of both the forward (ATP-PFK) and reverse (fructose-bisphosphatase (FBPase)) reactions. In Entamoeba histolytica (strain ATCC 30459 / HM-1:IMSS / ABRM), this protein is Pyrophosphate--fructose 6-phosphate 1-phosphotransferase.